A 351-amino-acid chain; its full sequence is Foldase protein PrsA 1 (351 aa).

Positions 1–22 are cleaved as a signal peptide; it reads MKNSNKLIASVVTLASVMALAA. The N-palmitoyl cysteine moiety is linked to residue Cys-23. Residue Cys-23 is the site of S-diacylglycerol cysteine attachment. The PpiC domain maps to 145-240; that stretch reads TPTMAVEMIT…KKFYIVKVTK (96 aa). Low complexity-rich tracts occupy residues 303–317 and 326–351; these read KTKA…SESS and ESEQ…PAAQ. Residues 303–351 form a disordered region; sequence KTKAASESSTTSESSKAAEENPSESEQTQTSSAEEPTETEAQTQEPAAQ.

This sequence belongs to the PrsA family.

The protein localises to the cell membrane. It carries out the reaction [protein]-peptidylproline (omega=180) = [protein]-peptidylproline (omega=0). Its function is as follows. Plays a major role in protein secretion by helping the post-translocational extracellular folding of several secreted proteins. The sequence is that of Foldase protein PrsA 1 from Streptococcus pyogenes serotype M6 (strain ATCC BAA-946 / MGAS10394).